The primary structure comprises 209 residues: Shikimate kinase (209 aa).

ATP is bound at residue 47 to 52 (GAGKTT). T51 contributes to the Mg(2+) binding site. Positions 69, 93, and 115 each coordinate substrate. An ATP-binding site is contributed by R153. R172 contacts substrate.

This sequence belongs to the shikimate kinase family. In terms of assembly, monomer. It depends on Mg(2+) as a cofactor.

The protein localises to the cytoplasm. It catalyses the reaction shikimate + ATP = 3-phosphoshikimate + ADP + H(+). The protein operates within metabolic intermediate biosynthesis; chorismate biosynthesis; chorismate from D-erythrose 4-phosphate and phosphoenolpyruvate: step 5/7. In terms of biological role, catalyzes the specific phosphorylation of the 3-hydroxyl group of shikimic acid using ATP as a cosubstrate. This chain is Shikimate kinase, found in Bordetella avium (strain 197N).